The following is a 313-amino-acid chain: Sororin-like protein 1 (313 aa).

An FGF motif motif is present at residues 44–46; sequence FGF. Positions 105-287 are disordered; sequence ADENQQSVPT…NDNLKELTPG (183 aa). The span at 107 to 118 shows a compositional bias: polar residues; that stretch reads ENQQSVPTVSIA. Pro residues predominate over residues 123 to 134; sequence PELPPSSSPLLP. Positions 135–154 are enriched in low complexity; the sequence is PNGSESSSPIPLSLLSTSSL. Residues 155–170 are compositionally biased toward polar residues; that stretch reads QQRKITPSNLSNTSKP. Residues 184–196 are compositionally biased toward basic residues; it reads HGHHLTRLRKKRR. Basic and acidic residues predominate over residues 249-264; sequence EKKILKTYHSQDKDTA. The tract at residues 288–310 is C-terminal Sororin domain; the sequence is KKEYLKSIKKYFQDVDDYQLHVV.

It belongs to the sororin family. In terms of assembly, interacts with Pds5 and Psm3.

It localises to the nucleus. In terms of biological role, regulator of sister chromatid cohesion in mitosis stabilizing cohesin complex association with chromatin. Antagonizes the action of wpl1 which stimulates cohesin dissociation from chromatin. Cohesion ensures that chromosome partitioning is accurate in dividing cells and may play an important role in DNA repair. In Schizosaccharomyces pombe (strain 972 / ATCC 24843) (Fission yeast), this protein is Sororin-like protein 1.